The following is a 496-amino-acid chain: Aminoacetaldehyde dehydrogenase (496 aa).

Residues Leu166, Trp168, Lys192, Ser246, Thr249, and Tyr256 each contribute to the NADH site. Glu268 serves as the catalytic Proton acceptor. Cys269 lines the NADH pocket. Residue Cys303 is the Nucleophile of the active site. Positions 353 and 398 each coordinate NADH.

It belongs to the aldehyde dehydrogenase family. Homotetramer, formed by two symmetrical dimers.

It carries out the reaction aminoacetaldehyde + NAD(+) + H2O = glycine + NADH + 2 H(+). The catalysed reaction is 3-aminopropanal + NAD(+) + H2O = beta-alanine + NADH + 2 H(+). In terms of biological role, NAD(+)-dependent aminoaldehyde dehydrogenase highly efficient with protonated aminoacetaldehyde (ACTAL) and 3-aminopropanaldehyde (APAL). Likely participates in a still uncharacterized metabolic pathway present in proteobacteria species, in which ACTAL might be an intermediate, yielding glycine. Highly prefers NAD(+) over NADP(+). Shows very poor activity with acetaldehyde, propanaldehyde, butanaldehyde, pentanaldehyde, dimethylaminoacetaldehyde, trimethylaminoacetaldehyde (betaine aldehyde), trimethylaminobutanaldehyde, short aliphatic hydroxyaldehydes such as 3-hydroxypropanaldehyde and 2-hydroxypropanaldehyde (lactaldehyde), and aromatic aldehydes. The sequence is that of Aminoacetaldehyde dehydrogenase from Pseudomonas aeruginosa (strain ATCC 15692 / DSM 22644 / CIP 104116 / JCM 14847 / LMG 12228 / 1C / PRS 101 / PAO1).